Reading from the N-terminus, the 387-residue chain is Phosphoglycerate kinase (387 aa).

Residues 21 to 23, R36, 59 to 62, R113, and R146 each bind substrate; these read DLN and HLGR. Residues K197, E314, and 340-343 contribute to the ATP site; that span reads GGDT.

Belongs to the phosphoglycerate kinase family. In terms of assembly, monomer.

The protein localises to the cytoplasm. It carries out the reaction (2R)-3-phosphoglycerate + ATP = (2R)-3-phospho-glyceroyl phosphate + ADP. It functions in the pathway carbohydrate degradation; glycolysis; pyruvate from D-glyceraldehyde 3-phosphate: step 2/5. This chain is Phosphoglycerate kinase (pgk), found in Pasteurella multocida (strain Pm70).